The following is a 496-amino-acid chain: Apulose kinase (496 aa).

ATP-binding positions include 13–15, Thr-267, Gly-308, and 408–412; these read TTN and GATQN.

This sequence belongs to the FGGY kinase family.

The enzyme catalyses apulose + ATP = apulose 4-phosphate + ADP + H(+). It functions in the pathway carbohydrate metabolism. Involved in catabolism of D-apiose. Catalyzes phosphorylation of apulose to form apulose 4-phosphate. This is Apulose kinase from Pectobacterium atrosepticum (strain SCRI 1043 / ATCC BAA-672) (Erwinia carotovora subsp. atroseptica).